A 440-amino-acid chain; its full sequence is General transcription factor IIE subunit 1 (440 aa).

Ala2 bears the N-acetylalanine mark. Residues 14–104 (LKRLAKYVIR…NYRTLVNVVK (91 aa)) form the HTH TFE/IIEalpha-type domain. The residue at position 67 (Lys67) is an N6-acetyllysine. Positions 129, 132, 154, and 157 each coordinate Zn(2+). A C4-type zinc finger spans residues 129 to 157 (CPVCCSTFTDLEANQLFDPMTGTFRCTFC). Ser268 carries the phosphoserine modification. Residues 333-353 (SSVTAGSVGAAAPVTAANGSD) show a composition bias toward low complexity. The tract at residues 333–395 (SSVTAGSVGA…EEFEEVADDP (63 aa)) is disordered. Composition is skewed to acidic residues over residues 354-364 (SESETSESDDD) and 381-393 (EDEEDEEFEEVAD).

Belongs to the TFIIE alpha subunit family. As to quaternary structure, tetramer of two alpha and two beta chains. Interacts with TAF6/TAFII80. Interacts with ATF7IP. Interacts with SND1. Part of TBP-based Pol II pre-initiation complex (PIC), in which Pol II core assembles with general transcription factors and other specific initiation factors including GTF2E1, GTF2E2, GTF2F1, GTF2F2, TCEA1, ERCC2, ERCC3, GTF2H2, GTF2H3, GTF2H4, GTF2H5, GTF2A1, GTF2A2, GTF2B and TBP; this large multi-subunit PIC complex mediates DNA unwinding and targets Pol II core to the transcription start site where the first phosphodiester bond forms.

The protein resides in the nucleus. Functionally, recruits TFIIH to the initiation complex and stimulates the RNA polymerase II C-terminal domain kinase and DNA-dependent ATPase activities of TFIIH. Both TFIIH and TFIIE are required for promoter clearance by RNA polymerase. In Mus musculus (Mouse), this protein is General transcription factor IIE subunit 1 (Gtf2e1).